A 1573-amino-acid polypeptide reads, in one-letter code: Synaptojanin-1 (1573 aa).

The SAC domain maps to 119 to 442; the sequence is VRKVLNSGNF…GDSISKIYAG (324 aa). Positions 500 to 899 are catalytic; the sequence is GSLRVSEQTL…GPPDGTVLVS (400 aa). Phosphoserine occurs at positions 820 and 830. Residues 902–971 form the RRM domain; that stretch reads SSLPENNFFD…RTITIALKSP (70 aa). The segment covering 1029–1054 has biased composition (low complexity); sequence HLQPSSSSGLGTSPSSSPRTSPCQSP. 4 disordered regions span residues 1029 to 1322, 1341 to 1360, 1370 to 1463, and 1535 to 1573; these read HLQP…PLKI, SVQTSPVPTPDPKRLIQLPS, VSCM…GFKD, and SRRPPPPPVPLLPPGTSPPVDPFTTLASKASPTLDFTER. Ser1053 is modified (phosphoserine). Pro residues predominate over residues 1108–1130; sequence PPPPRPVAPPTRPAPPQRPPPPS. Phosphoserine occurs at positions 1150 and 1178. Arg1201 bears the Omega-N-methylarginine mark. Thr1220 carries the post-translational modification Phosphothreonine. Residues 1221 to 1234 show a composition bias toward polar residues; sequence PESQSKTSETSKGS. Ser1292 is modified (phosphoserine). The segment covering 1293–1304 has biased composition (low complexity); the sequence is SHSLPSEASSQP. The segment covering 1313-1322 has biased composition (basic and acidic residues); that stretch reads DGKRESPLKI. Ser1318 and Ser1345 each carry phosphoserine. A Phosphothreonine modification is found at Thr1349. The segment covering 1382–1407 has biased composition (polar residues); sequence RSQSQENMRSSPNPFITGLTRTNPFS. 3 tandem repeats follow at residues 1396–1398, 1406–1408, and 1417–1419. Residues 1396 to 1419 are 3 X 3 AA repeats of N-P-F; it reads FITGLTRTNPFSDRTAAPGNPFRA. A compositionally biased stretch (pro residues) spans 1536 to 1555; it reads RRPPPPPVPLLPPGTSPPVD. Residues Ser1551 and Ser1565 each carry the phosphoserine modification.

It belongs to the synaptojanin family. This sequence in the central section; belongs to the inositol 1,4,5-trisphosphate 5-phosphatase family. In terms of assembly, interacts with ASH/GRB2. Interacts with PACSIN1, PACSIN2 and PACSIN3. Interacts with AMPH, SH3GL1, SH3GL2 and SH3GL3. Interacts with MYO1E (via SH3 domain). Interacts with BIN1 and DNM1. Interacts with EPS15.

Its subcellular location is the cytoplasm. The protein resides in the perinuclear region. It carries out the reaction a 1,2-diacyl-sn-glycero-3-phospho-(1D-myo-inositol-4,5-bisphosphate) + H2O = a 1,2-diacyl-sn-glycero-3-phospho-(1D-myo-inositol 4-phosphate) + phosphate. In terms of biological role, phosphatase that acts on various phosphoinositides, including phosphatidylinositol 4-phosphate, phosphatidylinositol (4,5)-bisphosphate and phosphatidylinositol (3,4,5)-trisphosphate. Has a role in clathrin-mediated endocytosis. Hydrolyzes PIP2 bound to actin regulatory proteins resulting in the rearrangement of actin filaments downstream of tyrosine kinase and ASH/GRB2. In Homo sapiens (Human), this protein is Synaptojanin-1 (SYNJ1).